The sequence spans 242 residues: Small ribosomal subunit protein uS7m (242 aa).

Residues Met1–Tyr37 constitute a mitochondrion transit peptide. The residue at position 228 (Lys228) is an N6-acetyllysine.

Belongs to the universal ribosomal protein uS7 family. As to quaternary structure, component of the mitochondrial ribosome small subunit (28S) which comprises a 12S rRNA and about 30 distinct proteins.

Its subcellular location is the mitochondrion. This Mus musculus (Mouse) protein is Small ribosomal subunit protein uS7m (Mrps7).